The chain runs to 227 residues: PKHD-type hydroxylase Bcep18194_B0892 (227 aa).

The region spanning 78-178 (KVFPPLFNRY…RVASFFWIQS (101 aa)) is the Fe2OG dioxygenase domain. Fe cation-binding residues include His-96, Asp-98, and His-159. 2-oxoglutarate is bound at residue Arg-169.

Fe(2+) serves as cofactor. Requires L-ascorbate as cofactor.

This Burkholderia lata (strain ATCC 17760 / DSM 23089 / LMG 22485 / NCIMB 9086 / R18194 / 383) protein is PKHD-type hydroxylase Bcep18194_B0892.